Reading from the N-terminus, the 345-residue chain is NADPH dehydrogenase (345 aa).

23 to 26 (SPMC) contributes to the FMN binding site. A substrate-binding site is contributed by tyrosine 28. FMN is bound by residues alanine 60 and glutamine 102. Position 164 to 167 (164 to 167 (HGAH)) interacts with substrate. Residues arginine 215 and 307-308 (GR) each bind FMN.

It belongs to the NADH:flavin oxidoreductase/NADH oxidase family. NamA subfamily. Homotetramer. Requires FMN as cofactor.

The catalysed reaction is A + NADPH + H(+) = AH2 + NADP(+). Catalyzes the reduction of the double bond of an array of alpha,beta-unsaturated aldehydes and ketones. It also reduces the nitro group of nitroester and nitroaromatic compounds. It could have a role in detoxification processes. The protein is NADPH dehydrogenase of Bacillus cereus (strain B4264).